The primary structure comprises 531 residues: Zinc finger protein 837 (531 aa).

Residues 1–101 (MEAPAQKAGQ…CGPTSSQNPE (101 aa)) form a disordered region. The span at 24–50 (AREKRPEEPRPLEEDRAGSRPTQKGDL) shows a compositional bias: basic and acidic residues. 8 consecutive C2H2-type zinc fingers follow at residues 271–293 (YACD…QRIH), 299–321 (YECA…QKTH), 363–385 (YECA…RRVH), 391–413 (YACP…QRTH), 419–441 (YACP…QRAH), 447–469 (YGCS…ERLH), 475–497 (YICR…LRTH), and 503–525 (YACG…RKRH).

It belongs to the krueppel C2H2-type zinc-finger protein family.

The protein resides in the nucleus. Its function is as follows. May be involved in transcriptional regulation. The protein is Zinc finger protein 837 (ZNF837) of Homo sapiens (Human).